The primary structure comprises 340 residues: Ferrochelatase (340 aa).

Fe cation-binding residues include His202 and Glu283.

The protein belongs to the ferrochelatase family.

The protein resides in the cytoplasm. The enzyme catalyses heme b + 2 H(+) = protoporphyrin IX + Fe(2+). The protein operates within porphyrin-containing compound metabolism; protoheme biosynthesis; protoheme from protoporphyrin-IX: step 1/1. In terms of biological role, catalyzes the ferrous insertion into protoporphyrin IX. The chain is Ferrochelatase from Acinetobacter baylyi (strain ATCC 33305 / BD413 / ADP1).